Reading from the N-terminus, the 127-residue chain is Cystatin cpi-1 (127 aa).

The N-terminal stretch at 1 to 19 is a signal peptide; that stretch reads MFFPIVWLSVLLIISKSFA. Positions 68-72 match the Secondary area of contact motif; that stretch reads QVVAG. Cysteines 86 and 98 form a disulfide.

This sequence belongs to the cystatin family.

In terms of biological role, cysteine protease inhibitor which inhibits members of the peptidase C1 family. Does not inhibit asparaginyl endopeptidase. This Brugia malayi (Filarial nematode worm) protein is Cystatin cpi-1.